A 121-amino-acid chain; its full sequence is Large ribosomal subunit protein uL18 (121 aa).

It belongs to the universal ribosomal protein uL18 family. In terms of assembly, part of the 50S ribosomal subunit; part of the 5S rRNA/L5/L18/L25 subcomplex. Contacts the 5S and 23S rRNAs.

This is one of the proteins that bind and probably mediate the attachment of the 5S RNA into the large ribosomal subunit, where it forms part of the central protuberance. This chain is Large ribosomal subunit protein uL18, found in Anaplasma phagocytophilum (strain HZ).